The following is a 456-amino-acid chain: N(6)-adenosine-methyltransferase non-catalytic subunit METTL14 (456 aa).

Positions 45–76 (AETRETCRASYDTSAPNAKRKYQDEGETDEDK) are disordered. Interaction with METTL3 stretches follow at residues 135–136 (RD) and 237–238 (SG). The tract at residues 245–254 (RVCLRKWGYR) is positively charged region required for RNA-binding. Interaction with METTL3 regions lie at residues 255–258 (RCED) and 278–287 (KAVFQRTKEH). Residues 297 to 298 (KR) form a positively charged region required for RNA-binding region. Positions 308 to 312 (NVDID) are interaction with METTL3. Residues 393 to 456 (ERLRPKSPPP…GAHRGGFPPR (64 aa)) form a disordered region. Ser-399 carries the phosphoserine modification. Positions 409–423 (GGGAPRGGGRGGTSA) are enriched in gly residues. Residues 425-440 (RGRERNRSNFRGERGG) are compositionally biased toward basic and acidic residues. Positions 441 to 450 (FRGGRGGAHR) are enriched in gly residues.

The protein belongs to the MT-A70-like family. In terms of assembly, heterodimer; heterodimerizes with METTL3 to form an antiparallel heterodimer that constitutes an active methyltransferase. Component of the WMM complex, a N6-methyltransferase complex composed of a catalytic subcomplex, named MAC, and of an associated subcomplex, named MACOM. The MAC subcomplex is composed of METTL3 and METTL14. The MACOM subcomplex is composed of WTAP, ZC3H13, CBLL1/HAKAI, VIRMA, and, in some cases of RBM15 (RBM15 or RBM15B).

It localises to the nucleus. The METTL3-METTL14 heterodimer forms a N6-methyltransferase complex that methylates adenosine residues at the N(6) position of some mRNAs and regulates the circadian clock, differentiation of embryonic stem cells and cortical neurogenesis. In the heterodimer formed with METTL3, METTL14 constitutes the RNA-binding scaffold that recognizes the substrate rather than the catalytic core. N6-methyladenosine (m6A), which takes place at the 5'-[AG]GAC-3' consensus sites of some mRNAs, plays a role in mRNA stability and processing. M6A acts as a key regulator of mRNA stability by promoting mRNA destabilization and degradation. In embryonic stem cells (ESCs), m6A methylation of mRNAs encoding key naive pluripotency-promoting transcripts results in transcript destabilization. M6A regulates spermatogonial differentiation and meiosis and is essential for male fertility and spermatogenesis. M6A also regulates cortical neurogenesis: m6A methylation of transcripts related to transcription factors, neural stem cells, the cell cycle and neuronal differentiation during brain development promotes their destabilization and decay, promoting differentiation of radial glial cells. In Bos taurus (Bovine), this protein is N(6)-adenosine-methyltransferase non-catalytic subunit METTL14 (METTL14).